Reading from the N-terminus, the 103-residue chain is Ig lambda chain C region (103 aa).

In terms of domain architecture, Ig-like spans 6 to 99 (PTITLFPPSK…NGTSITKTLK (94 aa)). Cysteines 28 and 85 form a disulfide.

This is Ig lambda chain C region from Gallus gallus (Chicken).